A 230-amino-acid polypeptide reads, in one-letter code: Probable cytokinin riboside 5'-monophosphate phosphoribohydrolase LOG4 (230 aa).

Residues Glu-91, 109–110 (RK), and 126–132 (GYGTIEE) contribute to the substrate site.

The protein belongs to the LOG family.

It carries out the reaction N(6)-(dimethylallyl)adenosine 5'-phosphate + H2O = N(6)-dimethylallyladenine + D-ribose 5-phosphate. The catalysed reaction is 9-ribosyl-trans-zeatin 5'-phosphate + H2O = trans-zeatin + D-ribose 5-phosphate. Its function is as follows. Cytokinin-activating enzyme working in the direct activation pathway. Phosphoribohydrolase that converts inactive cytokinin nucleotides to the biologically active free-base forms. The polypeptide is Probable cytokinin riboside 5'-monophosphate phosphoribohydrolase LOG4 (LOGL4) (Oryza sativa subsp. japonica (Rice)).